A 384-amino-acid chain; its full sequence is 4-hydroxy-3-methylbut-2-en-1-yl diphosphate synthase (flavodoxin) (384 aa).

Cys280, Cys283, Cys315, and Glu322 together coordinate [4Fe-4S] cluster.

The protein belongs to the IspG family. [4Fe-4S] cluster is required as a cofactor.

The catalysed reaction is (2E)-4-hydroxy-3-methylbut-2-enyl diphosphate + oxidized [flavodoxin] + H2O + 2 H(+) = 2-C-methyl-D-erythritol 2,4-cyclic diphosphate + reduced [flavodoxin]. Its pathway is isoprenoid biosynthesis; isopentenyl diphosphate biosynthesis via DXP pathway; isopentenyl diphosphate from 1-deoxy-D-xylulose 5-phosphate: step 5/6. In terms of biological role, converts 2C-methyl-D-erythritol 2,4-cyclodiphosphate (ME-2,4cPP) into 1-hydroxy-2-methyl-2-(E)-butenyl 4-diphosphate. This chain is 4-hydroxy-3-methylbut-2-en-1-yl diphosphate synthase (flavodoxin), found in Frankia alni (strain DSM 45986 / CECT 9034 / ACN14a).